The sequence spans 171 residues: Co-chaperone protein HscB (171 aa).

The 73-residue stretch at 2–74 folds into the J domain; the sequence is DYFTLFGLPA…LMRAEYLLSL (73 aa).

It belongs to the HscB family. As to quaternary structure, interacts with HscA and stimulates its ATPase activity. Interacts with IscU.

Co-chaperone involved in the maturation of iron-sulfur cluster-containing proteins. Seems to help targeting proteins to be folded toward HscA. This is Co-chaperone protein HscB from Escherichia coli (strain SMS-3-5 / SECEC).